The following is a 1199-amino-acid chain: Metabotropic glutamate receptor 1 (1199 aa).

An N-terminal signal peptide occupies residues 1–20 (MVRLLLIFFPMIFLEMSILP). At 21 to 592 (RMPDRKVLLA…IRYLEWSDIE (572 aa)) the chain is on the extracellular side. C67 and C109 are joined by a disulfide. Y74 serves as a coordination point for L-glutamate. Residue N98 is glycosylated (N-linked (GlcNAc...) asparagine). L-glutamate-binding positions include S165 and 186 to 188 (SAT). A glycan (N-linked (GlcNAc...) asparagine) is linked at N223. Y236 provides a ligand contact to L-glutamate. C289 and C291 are disulfide-bonded. Residue D318 coordinates L-glutamate. The cysteines at positions 378 and 394 are disulfide-linked. N397 carries N-linked (GlcNAc...) asparagine glycosylation. L-glutamate is bound at residue K409. Cysteines 432 and 439 form a disulfide. N515 carries an N-linked (GlcNAc...) asparagine glycan. A helical membrane pass occupies residues 593 to 615 (SIIAIAFSCLGILVTLFVTLIFV). Residues 616–629 (LYRDTPVVKSSSRE) lie on the Cytoplasmic side of the membrane. A helical transmembrane segment spans residues 630 to 650 (LCYIILAGIFLGYVCPFTLIA). The Extracellular segment spans residues 651–658 (KPTTTSCY). The cysteines at positions 657 and 746 are disulfide-linked. A helical membrane pass occupies residues 659–680 (LQRLLVGLSSAMCYSALVTKTN). At 681–703 (RIARILAGSKKKICTRKPRFMSA) the chain is on the cytoplasmic side. A helical transmembrane segment spans residues 704-727 (WAQVIIASILISVQLTLVVTLIIM). Residues 728 to 750 (EPPMPILSYPSIKEVYLICNTSN) are Extracellular-facing. N747 carries N-linked (GlcNAc...) asparagine glycosylation. A helical membrane pass occupies residues 751–772 (LGVVAPVGYNGLLIMSCTYYAF). The Cytoplasmic portion of the chain corresponds to 773 to 785 (KTRNVPANFNEAK). Residues 786 to 807 (YIAFTMYTTCIIWLAFVPIYFG) form a helical membrane-spanning segment. Topologically, residues 808–815 (SNYKIITT) are extracellular. Residues 816–840 (CFAVSLSVTVALGCMFTPKMYIIIA) traverse the membrane as a helical segment. Residues 841-1199 (KPERNVRSAF…RDYKQSSSTL (359 aa)) are Cytoplasmic-facing. S853 is modified (phosphoserine). T871 is modified (phosphothreonine). 3 disordered regions span residues 882–906 (GAGN…APKG), 959–1035 (EEDN…QPKS), and 1055–1082 (HAVL…QHLQ). The segment covering 885–895 (NANSNGKSVSW) has biased composition (polar residues). S894 and S969 each carry phosphoserine. Over residues 1012-1032 (GLPPPLPQQQQQPPPQPPPQQ) the composition is skewed to pro residues. S1097 carries the phosphoserine modification. The interval 1118–1177 (VYEREGNTEEDDLEEEEDLPAASKLTPEDSPALTPPSPFRDSVASGSSVPSSPVSESVLC) is disordered. Acidic residues predominate over residues 1125–1136 (TEEDDLEEEEDL). Position 1147 is a phosphoserine (S1147). A Phosphothreonine modification is found at T1151. The residue at position 1154 (S1154) is a Phosphoserine. Residues 1159-1175 (SVASGSSVPSSPVSESV) are compositionally biased toward low complexity.

The protein belongs to the G-protein coupled receptor 3 family. As to quaternary structure, homodimer; disulfide-linked. The PPXXF motif binds HOMER1, HOMER2 and HOMER3. Interacts with TAMALIN. Interacts with RYR1, RYR2, ITPR1, SHANK1 and SHANK3. Interacts with SHIA1. In terms of tissue distribution, expressed in the striatum (at protein level). Expressed in type II unipolar brush cells of the cerebellum (at protein level).

It localises to the cell membrane. The protein localises to the postsynaptic cell membrane. It is found in the cell projection. The protein resides in the dendrite. G-protein coupled receptor for glutamate. Ligand binding causes a conformation change that triggers signaling via guanine nucleotide-binding proteins (G proteins) and modulates the activity of down-stream effectors. Signaling activates a phosphatidylinositol-calcium second messenger system. May participate in the central action of glutamate in the CNS, such as long-term potentiation in the hippocampus and long-term depression in the cerebellum (By. similarity). May function in the light response in the retina. Induces GRID1 and GRID2 cation-channel activation via GNAQ-PLC-PKC pathway in dopaminergic neurons and cerebellar Purkinje cell, respectively. This chain is Metabotropic glutamate receptor 1 (Grm1), found in Mus musculus (Mouse).